A 319-amino-acid chain; its full sequence is MSTQTRVRHFLADDDLTPAQQREVLELASELKQHPYSRKTYDGPQSVAVLFDKTSTRTRFSFDAGISQLGGHAIVVDSGKSQMGKGETFQDTGAVLSRFVSTIVWRTGSHQNLLDMAETATVPIVNALSDDLHPCQILADLQTCIEHLCPQEGVPGLKGLKAVYLGDGDNNMANSYMIGFATAGLDITIIAPKKFQPKQEFVDRAEKRASETGAIVSVTADISAVSDADVVITDTWVSMGMENDGIDRRTPFLPYQVNDEVMALAKKSAIFLHCLPAYRGSEVAASVIDGPQSVVFDEAENRLHAQKALLVWLMENQPR.

Carbamoyl phosphate-binding positions include 55-58 (STRT), Q82, R106, and 133-136 (HPCQ). Residues N171, D234, and 238 to 239 (SM) contribute to the L-ornithine site. Residues 274 to 275 (CL) and R302 contribute to the carbamoyl phosphate site.

This sequence belongs to the aspartate/ornithine carbamoyltransferase superfamily. OTCase family.

Its subcellular location is the cytoplasm. It carries out the reaction carbamoyl phosphate + L-ornithine = L-citrulline + phosphate + H(+). It functions in the pathway amino-acid biosynthesis; L-arginine biosynthesis; L-arginine from L-ornithine and carbamoyl phosphate: step 1/3. Its function is as follows. Reversibly catalyzes the transfer of the carbamoyl group from carbamoyl phosphate (CP) to the N(epsilon) atom of ornithine (ORN) to produce L-citrulline. The chain is Ornithine carbamoyltransferase from Corynebacterium diphtheriae (strain ATCC 700971 / NCTC 13129 / Biotype gravis).